The chain runs to 81 residues: Photosystem I iron-sulfur center (81 aa).

2 consecutive 4Fe-4S ferredoxin-type domains span residues 2-31 (SHSVKIYDTCIGCTQCVRACPTDVLEMIPW) and 39-68 (IASAPRTEDCVGCKRCESACPTDFLSVRVY). [4Fe-4S] cluster-binding residues include Cys-11, Cys-14, Cys-17, Cys-21, Cys-48, Cys-51, Cys-54, and Cys-58.

The eukaryotic PSI reaction center is composed of at least 11 subunits. [4Fe-4S] cluster is required as a cofactor.

Its subcellular location is the plastid. It is found in the chloroplast thylakoid membrane. The catalysed reaction is reduced [plastocyanin] + hnu + oxidized [2Fe-2S]-[ferredoxin] = oxidized [plastocyanin] + reduced [2Fe-2S]-[ferredoxin]. Its function is as follows. Apoprotein for the two 4Fe-4S centers FA and FB of photosystem I (PSI); essential for photochemical activity. FB is the terminal electron acceptor of PSI, donating electrons to ferredoxin. The C-terminus interacts with PsaA/B/D and helps assemble the protein into the PSI complex. Required for binding of PsaD and PsaE to PSI. PSI is a plastocyanin-ferredoxin oxidoreductase, converting photonic excitation into a charge separation, which transfers an electron from the donor P700 chlorophyll pair to the spectroscopically characterized acceptors A0, A1, FX, FA and FB in turn. The protein is Photosystem I iron-sulfur center of Acorus calamus (Sweet flag).